Reading from the N-terminus, the 456-residue chain is Glutamate-gated chloride channel (456 aa).

The N-terminal stretch at 1 to 22 is a signal peptide; that stretch reads MGSGHYFWAILYFASLCSASLA. At 23–245 the chain is on the extracellular side; that stretch reads NNAKINFREK…VDLLFKREFS (223 aa). The L-glutamate site is built by Arg71, Arg90, and Ser154. A disulfide bridge connects residues Cys163 and Cys177. Ser183 serves as a coordination point for L-glutamate. Cys222 and Cys233 are joined by a disulfide. A helical transmembrane segment spans residues 246–268; that stretch reads YYLIQIYIPCCMLVIVSWVSFWL. Over 269–273 the chain is Cytoplasmic; it reads DQGAV. Residues 274–295 traverse the membrane as a helical segment; it reads PARVSLGVTTLLTMATQTSGIN. Over 296–302 the chain is Extracellular; the sequence is ASLPPVS. A helical membrane pass occupies residues 303 to 323; it reads YTKAIDVWTGVCLTFVFGALL. The Cytoplasmic portion of the chain corresponds to 324-426; the sequence is EFALVNYASR…RQCSRSKRID (103 aa). The chain crosses the membrane as a helical span at residues 427–450; the sequence is VISRITFPLVFALFNLVYWSTYLF. Residues 451-456 lie on the Extracellular side of the membrane; sequence REEEDE.

Belongs to the ligand-gated ion channel (TC 1.A.9) family. Glutamate-gated chloride channel (TC 1.A.9.4) subfamily. As to quaternary structure, pentamer. Homomultimer. In terms of tissue distribution, expressed in the medulla layers (at protein level). Expressed in all major ON pathway medulla neurons (Mi1, Tm3, Mi4, and Mi9) and in OFF pathway neurons (Tm1, Tm2, Tm4, and Tm9).

It localises to the postsynaptic cell membrane. Its subcellular location is the cell membrane. Glutamate binding triggers a rapidly reversible current, while the anti-helmintic drug ivermectin triggers a permanently open channel configuration. Inhibited by picrotoxin. In terms of biological role, glutamate-gated chloride channel subunit. Together with Gamma-aminobutyric acid receptor Rdl, plays an important role in the visual response by regulating the activity of ON/OFF-selective neurons. The polypeptide is Glutamate-gated chloride channel (GluClalpha) (Drosophila melanogaster (Fruit fly)).